The sequence spans 1186 residues: ATP-dependent helicase/nuclease subunit A (1186 aa).

The UvrD-like helicase ATP-binding domain occupies 2–460 (NFSKNQRAVI…IELSENYRSQ (459 aa)). 23–30 (ASAGSGKT) contacts ATP. The 285-residue stretch at 487 to 771 (DVELKAANRD…SVMTIHAAKG (285 aa)) folds into the UvrD-like helicase C-terminal domain.

Belongs to the helicase family. AddA subfamily. In terms of assembly, heterodimer of AddA and AddB/RexB. The cofactor is Mg(2+).

It carries out the reaction Couples ATP hydrolysis with the unwinding of duplex DNA by translocating in the 3'-5' direction.. The enzyme catalyses ATP + H2O = ADP + phosphate + H(+). The heterodimer acts as both an ATP-dependent DNA helicase and an ATP-dependent, dual-direction single-stranded exonuclease. Recognizes the chi site generating a DNA molecule suitable for the initiation of homologous recombination. The AddA nuclease domain is required for chi fragment generation; this subunit has the helicase and 3' -&gt; 5' nuclease activities. This chain is ATP-dependent helicase/nuclease subunit A, found in Oenococcus oeni (strain ATCC BAA-331 / PSU-1).